Consider the following 115-residue polypeptide: U3-lycotoxin-Ls1a (115 aa).

Positions 1–20 (MKFVLLFGVLLLTLFSYSSA) are cleaved as a signal peptide. Positions 21-44 (EMLDDFDQADEDELLSLIEKEEAR) are excised as a propeptide. 4 disulfide bridges follow: C48–C63, C55–C72, C62–C87, and C74–C85.

The protein belongs to the neurotoxin 19 (CSTX) family. 01 subfamily. Expressed by the venom gland.

The protein localises to the secreted. This is U3-lycotoxin-Ls1a from Lycosa singoriensis (Wolf spider).